We begin with the raw amino-acid sequence, 48 residues long: Large ribosomal subunit protein bL34 (48 aa).

Belongs to the bacterial ribosomal protein bL34 family.

The protein is Large ribosomal subunit protein bL34 (rpmH) of Mycoplasma pneumoniae (strain ATCC 29342 / M129 / Subtype 1) (Mycoplasmoides pneumoniae).